A 399-amino-acid chain; its full sequence is MKEKVVLAYSGGLDTSIIIPWLKENYEDIDVIAVCGNVGQEDKMEDVYEKALQSGASKAYVDDISEEFVTETIFKAVKAEAKYEGKYLLGTSLARPIIAKKLVEVAHKEGAKYICHGCTGKGNDQVRFEATIAALDPTIKVIAPWRIWDIKSREDAIDYAEKHNIKVTATKAKIYSVDANLWHVSTEGGDIEHLENEHKKDVYKQCVDPEDACDVAEYVEVYFEKGVPKKVNGEELSPVALIHKLNELGCKHGIGVIDIVENRLVGMKSRGIYETPGGTILYEAHNILESATLDKDTLHFKQMVSYKYGELIYNGLWYCKLRESIDAFMEQTQDNVTGTVKVKLYKGNIKPAGIFTENALYDEGISSFGNSELYDHKDAEGFINLFTLPLKIRAMKAGK.

8–16 (AYSGGLDTS) is a binding site for ATP. 2 residues coordinate L-citrulline: Y87 and S92. Residue G117 coordinates ATP. The L-aspartate site is built by T119, N123, and D124. N123 contacts L-citrulline. Positions 127, 176, 185, 261, and 273 each coordinate L-citrulline.

This sequence belongs to the argininosuccinate synthase family. Type 1 subfamily. As to quaternary structure, homotetramer.

It is found in the cytoplasm. It catalyses the reaction L-citrulline + L-aspartate + ATP = 2-(N(omega)-L-arginino)succinate + AMP + diphosphate + H(+). The protein operates within amino-acid biosynthesis; L-arginine biosynthesis; L-arginine from L-ornithine and carbamoyl phosphate: step 2/3. The protein is Argininosuccinate synthase of Clostridioides difficile (strain 630) (Peptoclostridium difficile).